Here is a 577-residue protein sequence, read N- to C-terminus: 5'-nucleotidase (577 aa).

An N-terminal signal peptide occupies residues 1–30; it reads MPRVPSASATGSSALLSLLCAFSLGRAAPF. Positions 39, 41, 86, and 118 each coordinate Zn(2+). Residue Asn135 is glycosylated (N-linked (GlcNAc...) asparagine). Residues His221 and His244 each contribute to the Zn(2+) site. Position 246 (Asn246) interacts with substrate. Asn311 and Asn347 each carry an N-linked (GlcNAc...) asparagine glycan. Disulfide bonds link Cys353–Cys358 and Cys365–Cys387. Arg354 lines the substrate pocket. Gln390 and Arg395 together coordinate substrate. N-linked (GlcNAc...) asparagine glycosylation occurs at Asn403. Substrate is bound at residue Phe417. Cys476 and Cys479 are joined by a disulfide. 500–506 provides a ligand contact to substrate; sequence YIAEGGD. Ser552 is lipidated: GPI-anchor amidated serine. Positions 553 to 577 are cleaved as a propeptide — removed in mature form; sequence ATLPIINLKIGLSLFAFLTWFLHCS.

The protein belongs to the 5'-nucleotidase family. In terms of assembly, homodimer. Requires Zn(2+) as cofactor.

It is found in the cell membrane. The catalysed reaction is a ribonucleoside 5'-phosphate + H2O = a ribonucleoside + phosphate. Hydrolyzes extracellular nucleotides into membrane permeable nucleosides. The chain is 5'-nucleotidase from Diplobatis ommata (Ocellated electric ray).